Reading from the N-terminus, the 512-residue chain is Maturase K (512 aa).

It belongs to the intron maturase 2 family. MatK subfamily.

It is found in the plastid. The protein resides in the chloroplast. Functionally, usually encoded in the trnK tRNA gene intron. Probably assists in splicing its own and other chloroplast group II introns. This is Maturase K from Dalea wrightii (Wright's prairie clover).